The sequence spans 372 residues: NAD(P)H-quinone oxidoreductase subunit 1 (372 aa).

9 consecutive transmembrane segments (helical) span residues 27 to 47 (AIWMPLPMILMLIGATVGVLV), 65 to 85 (PEYIGPLGLLAPVADGLKLVF), 97 to 117 (WLFTLGPILVVLPVFLSYLIV), 128 to 148 (IGTGIFLWIALSSIQPIGLLM), 166 to 186 (AAQSISYEIPLALSVLAIVMM), 204 to 224 (ILGWNIWRQPLGFLIFWIAAL), 266 to 286 (VLSALLVAVLYLGGWDFPIPI), 308 to 328 (ALGITMTLVKAYFLVFIAILL), and 347 to 367 (FLLPVGLVNLLLTAALKLAFP).

It belongs to the complex I subunit 1 family. In terms of assembly, NDH-1 is composed of at least 11 different subunits.

Its subcellular location is the cellular thylakoid membrane. The enzyme catalyses a plastoquinone + NADH + (n+1) H(+)(in) = a plastoquinol + NAD(+) + n H(+)(out). It carries out the reaction a plastoquinone + NADPH + (n+1) H(+)(in) = a plastoquinol + NADP(+) + n H(+)(out). NDH-1 shuttles electrons from an unknown electron donor, via FMN and iron-sulfur (Fe-S) centers, to quinones in the respiratory and/or the photosynthetic chain. The immediate electron acceptor for the enzyme in this species is believed to be plastoquinone. Couples the redox reaction to proton translocation, and thus conserves the redox energy in a proton gradient. The chain is NAD(P)H-quinone oxidoreductase subunit 1 from Trichormus variabilis (strain ATCC 29413 / PCC 7937) (Anabaena variabilis).